The following is a 268-amino-acid chain: MSDPRPARAVVVGIDGSRAATHAALWAVDEAVNRDIPLRLVYVIDPSQLSAAGEGGGQSAARAALHDASRKVEATGQPVKIETEVLCGRPLTKLMQESRSAAMLCVGSVGLDHVRGRRGSVAATLAGSALCPVAVIHPSPAEPATTSQVSAVVAEVDNGVVLRHAFEEARLRGVPLRAVAVHAAETPDDVEQGSRLAHVHLSRRLAHWTRLYPEVRVDRAIAGGSACRHLAANAKPGQLFVADSHSAHELCGAYQPGCAVLTVRSANL.

Residues Gly-13, 107 to 113, Arg-117, and 120 to 121 each bind ATP; these read GSVGLDH and SV.

Belongs to the universal stress protein A family.

In Mycobacterium tuberculosis (strain CDC 1551 / Oshkosh), this protein is Universal stress protein MT3220.